Reading from the N-terminus, the 162-residue chain is D-aminoacyl-tRNA deacylase (162 aa).

A Gly-cisPro motif, important for rejection of L-amino acids motif is present at residues 145-146; the sequence is GP.

Belongs to the DTD family. As to quaternary structure, homodimer.

The protein localises to the cytoplasm. The enzyme catalyses glycyl-tRNA(Ala) + H2O = tRNA(Ala) + glycine + H(+). It catalyses the reaction a D-aminoacyl-tRNA + H2O = a tRNA + a D-alpha-amino acid + H(+). An aminoacyl-tRNA editing enzyme that deacylates mischarged D-aminoacyl-tRNAs. Also deacylates mischarged glycyl-tRNA(Ala), protecting cells against glycine mischarging by AlaRS. Acts via tRNA-based rather than protein-based catalysis; rejects L-amino acids rather than detecting D-amino acids in the active site. By recycling D-aminoacyl-tRNA to D-amino acids and free tRNA molecules, this enzyme counteracts the toxicity associated with the formation of D-aminoacyl-tRNA entities in vivo and helps enforce protein L-homochirality. The chain is D-aminoacyl-tRNA deacylase from Bifidobacterium longum subsp. infantis (strain ATCC 15697 / DSM 20088 / JCM 1222 / NCTC 11817 / S12).